The sequence spans 92 residues: MKTILSMLIFVALFAAIVGNRWNLGYGIPHKQVKLPNGQLCKEPGDSCSKRDECCKADDQKTYSSGCAQTWSAMEGGFVRECYICAVESSMC.

Positions 1–19 are cleaved as a signal peptide; that stretch reads MKTILSMLIFVALFAAIVG. Cystine bridges form between Cys41–Cys55, Cys48–Cys67, Cys54–Cys82, and Cys85–Cys92.

This sequence belongs to the neurotoxin 21 family. As to expression, expressed by the venom gland.

The protein localises to the secreted. Potent insecticidal toxin with probable ion channel impairing activity. In vivo, reversibly paralyzes all flies within 30 minutes, even at low dose (0.3 nmol/g). This chain is U21-hexatoxin-Hi1a, found in Hadronyche infensa (Fraser island funnel-web spider).